Reading from the N-terminus, the 170-residue chain is MNQSSFTREELLACSRGEMFGPGNSKLPAPNMLMMDRIIEINEDGGSAGKGFIHAELDINPDLWFFDCHFKGDPVMPGCLGLDAMWQLLGFHLAWSGGPGRGRALGVGEVKFTGQILPEHKKVSYFIDMTRVIKRKLFMGVGNGRVEVDGREIYTAKDLKVGLFTDTSTF.

Residue His-69 is part of the active site.

The protein belongs to the thioester dehydratase family. FabA subfamily. As to quaternary structure, homodimer.

The protein localises to the cytoplasm. It catalyses the reaction a (3R)-hydroxyacyl-[ACP] = a (2E)-enoyl-[ACP] + H2O. The enzyme catalyses (3R)-hydroxydecanoyl-[ACP] = (2E)-decenoyl-[ACP] + H2O. The catalysed reaction is (2E)-decenoyl-[ACP] = (3Z)-decenoyl-[ACP]. It participates in lipid metabolism; fatty acid biosynthesis. In terms of biological role, necessary for the introduction of cis unsaturation into fatty acids. Catalyzes the dehydration of (3R)-3-hydroxydecanoyl-ACP to E-(2)-decenoyl-ACP and then its isomerization to Z-(3)-decenoyl-ACP. Can catalyze the dehydratase reaction for beta-hydroxyacyl-ACPs with saturated chain lengths up to 16:0, being most active on intermediate chain length. The polypeptide is 3-hydroxydecanoyl-[acyl-carrier-protein] dehydratase (Idiomarina loihiensis (strain ATCC BAA-735 / DSM 15497 / L2-TR)).